Here is a 417-residue protein sequence, read N- to C-terminus: Autophagy-related protein 18 (417 aa).

4 WD repeats span residues 1-36 (MSMN…KSYE), 76-114 (ELTF…LVYT), 185-225 (AHKS…KLYQ), and 230-269 (SMPS…GLSK). Residues 226–230 (FRRGS) carry the L/FRRG motif motif. Positions 267–300 (LSKTSSPSRKLESSRGSGDESAVESASSEMSSRK) are disordered. Positions 285 to 296 (DESAVESASSEM) are enriched in low complexity. WD repeat units lie at residues 300–346 (KHNG…AWIK) and 355–395 (GGSG…GGEG).

The protein belongs to the WD repeat PROPPIN family. As to quaternary structure, component of the PI(3,5)P2 regulatory complex.

It localises to the preautophagosomal structure membrane. It is found in the vacuole membrane. The protein resides in the endosome membrane. Functionally, the PI(3,5)P2 regulatory complex regulates both the synthesis and turnover of phosphatidylinositol 3,5-bisphosphate (PtdIns(3,5)P2). Necessary for proper vacuole morphology. Plays an important role in osmotically-induced vacuole fragmentation. Required for cytoplasm to vacuole transport (Cvt) vesicle formation, pexophagy and starvation-induced autophagy. Involved in correct ATG9 trafficking to the pre-autophagosomal structure. Might also be involved in premeiotic DNA replication. This is Autophagy-related protein 18 (ATG18) from Coccidioides immitis (strain RS) (Valley fever fungus).